We begin with the raw amino-acid sequence, 478 residues long: Bifunctional protein HldE (478 aa).

A ribokinase region spans residues Met-1–Ser-318. Residue Asn-195 to Glu-198 coordinates ATP. Asp-264 is an active-site residue. Positions Met-344–Asn-478 are cytidylyltransferase.

This sequence in the N-terminal section; belongs to the carbohydrate kinase PfkB family. In the C-terminal section; belongs to the cytidylyltransferase family. Homodimer.

It carries out the reaction D-glycero-beta-D-manno-heptose 7-phosphate + ATP = D-glycero-beta-D-manno-heptose 1,7-bisphosphate + ADP + H(+). The catalysed reaction is D-glycero-beta-D-manno-heptose 1-phosphate + ATP + H(+) = ADP-D-glycero-beta-D-manno-heptose + diphosphate. The protein operates within nucleotide-sugar biosynthesis; ADP-L-glycero-beta-D-manno-heptose biosynthesis; ADP-L-glycero-beta-D-manno-heptose from D-glycero-beta-D-manno-heptose 7-phosphate: step 1/4. It functions in the pathway nucleotide-sugar biosynthesis; ADP-L-glycero-beta-D-manno-heptose biosynthesis; ADP-L-glycero-beta-D-manno-heptose from D-glycero-beta-D-manno-heptose 7-phosphate: step 3/4. Catalyzes the phosphorylation of D-glycero-D-manno-heptose 7-phosphate at the C-1 position to selectively form D-glycero-beta-D-manno-heptose-1,7-bisphosphate. In terms of biological role, catalyzes the ADP transfer from ATP to D-glycero-beta-D-manno-heptose 1-phosphate, yielding ADP-D-glycero-beta-D-manno-heptose. The protein is Bifunctional protein HldE of Erwinia tasmaniensis (strain DSM 17950 / CFBP 7177 / CIP 109463 / NCPPB 4357 / Et1/99).